Here is a 448-residue protein sequence, read N- to C-terminus: Phosphohexose mutases (448 aa).

Ser-97 acts as the Phosphoserine intermediate in catalysis. Mg(2+) contacts are provided by Ser-97, Asp-237, Asp-239, and Asp-241.

This sequence belongs to the phosphohexose mutase family. Mg(2+) is required as a cofactor.

It catalyses the reaction alpha-D-glucose 1-phosphate = alpha-D-glucose 6-phosphate. It carries out the reaction alpha-D-mannose 1-phosphate = D-mannose 6-phosphate. The protein operates within nucleotide-sugar biosynthesis; GDP-alpha-D-mannose biosynthesis; alpha-D-mannose 1-phosphate from D-fructose 6-phosphate: step 2/2. Its function is as follows. Involved in xanthan production. This is Phosphohexose mutases (xanA) from Xanthomonas campestris pv. campestris (strain B100).